A 296-amino-acid polypeptide reads, in one-letter code: Glycine--tRNA ligase alpha subunit (296 aa).

Belongs to the class-II aminoacyl-tRNA synthetase family. In terms of assembly, tetramer of two alpha and two beta subunits.

Its subcellular location is the cytoplasm. The catalysed reaction is tRNA(Gly) + glycine + ATP = glycyl-tRNA(Gly) + AMP + diphosphate. The sequence is that of Glycine--tRNA ligase alpha subunit from Synechococcus sp. (strain CC9605).